The chain runs to 192 residues: Cytidylate kinase (192 aa).

7 to 15 (GPAGSGKST) contacts ATP.

It belongs to the cytidylate kinase family. Type 2 subfamily.

Its subcellular location is the cytoplasm. The enzyme catalyses CMP + ATP = CDP + ADP. It carries out the reaction dCMP + ATP = dCDP + ADP. This Natronomonas pharaonis (strain ATCC 35678 / DSM 2160 / CIP 103997 / JCM 8858 / NBRC 14720 / NCIMB 2260 / Gabara) (Halobacterium pharaonis) protein is Cytidylate kinase.